Consider the following 192-residue polypeptide: Glycerol-3-phosphate acyltransferase (192 aa).

A run of 5 helical transmembrane segments spans residues Phe4 to Ile24, Leu48 to Tyr68, Tyr74 to Phe94, Gly101 to Leu121, and Leu125 to Leu145.

Belongs to the PlsY family. As to quaternary structure, probably interacts with PlsX.

The protein localises to the cell inner membrane. It carries out the reaction an acyl phosphate + sn-glycerol 3-phosphate = a 1-acyl-sn-glycero-3-phosphate + phosphate. Its pathway is lipid metabolism; phospholipid metabolism. Functionally, catalyzes the transfer of an acyl group from acyl-phosphate (acyl-PO(4)) to glycerol-3-phosphate (G3P) to form lysophosphatidic acid (LPA). This enzyme utilizes acyl-phosphate as fatty acyl donor, but not acyl-CoA or acyl-ACP. The chain is Glycerol-3-phosphate acyltransferase from Histophilus somni (strain 129Pt) (Haemophilus somnus).